The chain runs to 114 residues: Large ribosomal subunit protein uL22 (114 aa).

It belongs to the universal ribosomal protein uL22 family. In terms of assembly, part of the 50S ribosomal subunit.

In terms of biological role, this protein binds specifically to 23S rRNA; its binding is stimulated by other ribosomal proteins, e.g. L4, L17, and L20. It is important during the early stages of 50S assembly. It makes multiple contacts with different domains of the 23S rRNA in the assembled 50S subunit and ribosome. Its function is as follows. The globular domain of the protein is located near the polypeptide exit tunnel on the outside of the subunit, while an extended beta-hairpin is found that lines the wall of the exit tunnel in the center of the 70S ribosome. The chain is Large ribosomal subunit protein uL22 from Streptococcus agalactiae serotype Ia (strain ATCC 27591 / A909 / CDC SS700).